A 489-amino-acid polypeptide reads, in one-letter code: 2-(3-amino-3-carboxypropyl)histidine synthase subunit 2 (489 aa).

Methionine 1 carries the post-translational modification N-acetylmethionine. Phosphoserine is present on serine 7. [4Fe-4S] cluster-binding residues include cysteine 89, cysteine 110, and cysteine 341. Serine 446 carries the post-translational modification Phosphoserine. A Phosphothreonine modification is found at threonine 467. The residue at position 488 (serine 488) is a Phosphoserine.

This sequence belongs to the DPH1/DPH2 family. DPH2 subfamily. Component of the 2-(3-amino-3-carboxypropyl)histidine synthase complex composed of DPH1, DPH2, DPH3 and a NADH-dependent reductase. Interacts with DPH1. [4Fe-4S] cluster is required as a cofactor.

The protein operates within protein modification; peptidyl-diphthamide biosynthesis. Functionally, required for the first step of diphthamide biosynthesis, a post-translational modification of histidine which occurs in elongation factor 2. DPH1 and DPH2 transfer a 3-amino-3-carboxypropyl (ACP) group from S-adenosyl-L-methionine (SAM) to a histidine residue, the reaction is assisted by a reduction system comprising DPH3 and a NADH-dependent reductase. Facilitates the reduction of the catalytic iron-sulfur cluster found in the DPH1 subunit. The chain is 2-(3-amino-3-carboxypropyl)histidine synthase subunit 2 (Dph2) from Mus musculus (Mouse).